A 511-amino-acid polypeptide reads, in one-letter code: MEKFEGYSEKHKSRQQYFVYPLLFQEYIYAFAHDYGLNDFEPVEIFSCNNKKFSSLLVKRLIIRMYQQSFWMNSVNHPNQDRLLDYKIGFYSEFYSQILSEGFAIVVETPFSLRELPCPKEKEIPKFQNLHSIHSIFSFLEDKFVHLDYLSHIEIPYPIHLEILVQLLQYRIQDVPSLHLLRFFLNNYSNWNSFITSMKSIFLLKKENKRLFRFLYNSYVSEYEFFLLFLRKQSSCLPLAASGTFLERIHFSKKMEHFWIMYPGFFRKTIWFFMDPLMHYVRYQGKALFASKGTPFLNKKWKWYLINLWQYCFSFWTQPRRIHLNQLANSCFDFMGYLSSVPKSPFLVKNQMLDNSFLIDTLIQKLDTIVPATALIGYLSKAQFCTGSGHPISKPIWTDLSDWDILDRFGRICRNLFHYHSGSSKKRTLYRLKYILRLSCARTLARKHKSTVRTFMQRLGSAFLEEFFTEEELVFSLMFTKTTLCSFRGSHSERIWYFDIIRINDLVKPLN.

Belongs to the intron maturase 2 family. MatK subfamily.

It localises to the plastid. It is found in the chloroplast. Functionally, usually encoded in the trnK tRNA gene intron. Probably assists in splicing its own and other chloroplast group II introns. In Lolium perenne (Perennial ryegrass), this protein is Maturase K.